A 443-amino-acid polypeptide reads, in one-letter code: Glutamine synthetase (443 aa).

The GS beta-grasp domain occupies 11–97; sequence VQVEVPRPRF…VYGYIYKGDE (87 aa). The region spanning 103–443 is the GS catalytic domain; sequence PRGILKRVLE…EWELERYFYV (341 aa). Mg(2+)-binding residues include Glu-126 and Glu-128. Glu-176 contributes to the ATP binding site. Glu-181 and Glu-188 together coordinate Mg(2+). Gly-233 lines the L-glutamate pocket. Residue His-237 participates in Mg(2+) binding. Residues 239–241 and Ser-241 each bind ATP; that span reads HIS. L-glutamate is bound by residues Arg-287, Glu-293, and Arg-305. The ATP site is built by Arg-305 and Arg-310. A Mg(2+)-binding site is contributed by Glu-322. Arg-324 contributes to the L-glutamate binding site.

It belongs to the glutamine synthetase family. As to quaternary structure, oligomer of 12 subunits arranged in the form of two hexagons. The cofactor is Mg(2+). Mn(2+) is required as a cofactor.

The protein resides in the cytoplasm. It carries out the reaction L-glutamate + NH4(+) + ATP = L-glutamine + ADP + phosphate + H(+). The catalysed reaction is hydroxylamine + L-glutamate + ATP = L-glutamine hydroxamate + ADP + phosphate. Its activity is regulated as follows. The activity of this enzyme is not controlled by adenylation. Functionally, carries out the ATP-dependent synthesis of glutamine from ammonium nitrogen and glutamate. Exhibits both L-gamma-glutamylhydroxamate synthetase and gamma-glutamyltransferase activities when using hydroxylamine as substrate; in fact, the enzyme possesses low biosynthetic activity, suggesting that the reaction is biased towards the degradation of glutamine under ammonia-rich conditions. Might play some role in ammonia assimilation under ammonia-starvation conditions. Can also use GTP instead of ATP in the synthetase reaction, but not CTP or UTP. The sequence is that of Glutamine synthetase from Thermococcus kodakarensis (strain ATCC BAA-918 / JCM 12380 / KOD1) (Pyrococcus kodakaraensis (strain KOD1)).